Reading from the N-terminus, the 60-residue chain is Large ribosomal subunit protein uL30 (60 aa).

It belongs to the universal ribosomal protein uL30 family. Part of the 50S ribosomal subunit.

The sequence is that of Large ribosomal subunit protein uL30 from Shewanella woodyi (strain ATCC 51908 / MS32).